A 1749-amino-acid chain; its full sequence is Intraflagellar transport protein 172 homolog (1749 aa).

N-acetylmethionine is present on Met-1. Lys-4 is covalently cross-linked (Glycyl lysine isopeptide (Lys-Gly) (interchain with G-Cter in SUMO1)). 9 WD repeats span residues Asp-14–Phe-53, Arg-64–Lys-103, Ile-110–Ile-148, Gly-150–Gly-191, Asn-195–Asp-233, Pro-238–Ala-278, Thr-284–Lys-323, Ser-483–Thr-520, and Met-521–Thr-559. A TPR 1 repeat occupies Asp-593–Thr-624. An Omega-N-methylarginine modification is found at Arg-672. TPR repeat units lie at residues Glu-692–Ile-725, Gly-809–Val-842, Val-854–Ile-887, Ser-912–Ile-945, Met-947–Val-970, Ser-971–Ile-1004, Glu-1042–Tyr-1075, Pro-1142–Val-1175, Val-1276–Gly-1309, Ile-1345–Lys-1378, Gly-1411–Tyr-1445, Ala-1447–Asn-1477, and Asp-1574–Ile-1607.

It belongs to the IFT172 family. As to quaternary structure, interacts with IFT88. Interacts with IFT57. Interacts with RABL2/RABL2A; binds preferentially to GDP-bound RABL2.

The protein resides in the cell projection. It is found in the cilium. Functionally, required for the maintenance and formation of cilia. Plays an indirect role in hedgehog (Hh) signaling, cilia being required for all activity of the hedgehog pathway. The polypeptide is Intraflagellar transport protein 172 homolog (IFT172) (Homo sapiens (Human)).